Consider the following 403-residue polypeptide: Na(+)/H(+) antiporter NhaH (403 aa).

The next 12 membrane-spanning stretches (helical) occupy residues 7–27, 34–54, 99–119, 125–145, 168–188, 196–216, 228–245, 250–272, 282–302, 311–331, 345–365, and 373–393; these read VFIQILLLLAISVTVIAIAKL, VALVLVGLVLGLTQLPFIEEA, LAFLGTFISSLTIGAASYFLL, VAFTFAALMSATDPISVLSIF, IAVVLFKIASIYLLTYIEMGW, FMFLKFAVGGALVGLILGYVF, LEVAFSALLFFGSYFIAE, SGVIAVVVGGFVFGDYGAKIGMS, FWDSVTLLANALIFLMVGLEI, WGYIVGAIAIVLVGRTIAVYI, ILINWGGLRGSLSIALALSLP, and QVLLLTFSVVLFSLIVQGLTL.

The protein belongs to the monovalent cation:proton antiporter 1 (CPA1) transporter (TC 2.A.36) family.

It is found in the cell membrane. Na(+)/H(+) antiporter that extrudes sodium in exchange for external protons. Can also transport lithium. The protein is Na(+)/H(+) antiporter NhaH (nhaH) of Halobacillus aidingensis.